The chain runs to 430 residues: Serine carboxypeptidase-like 13 (430 aa).

The first 22 residues, 1-22 (MSLTLEFLLLLIVLILSHHAHS), serve as a signal peptide directing secretion. 3 cysteine pairs are disulfide-bonded: C81–C319, C240–C254, and C278–C285. Residue N102 is glycosylated (N-linked (GlcNAc...) asparagine). The active site involves S177. N-linked (GlcNAc...) asparagine glycosylation is found at N299 and N323. Residue D355 is part of the active site. N371 carries an N-linked (GlcNAc...) asparagine glycan. H408 is an active-site residue.

Belongs to the peptidase S10 family. Expression not detected.

Its subcellular location is the secreted. The enzyme catalyses 2 1-O-(trans-sinapoyl)-beta-D-glucose = 1,2-di-O-sinapoyl beta-D-glucose + D-glucose. In terms of biological role, catalyzes the formation of 1,2-bis-O-sinapoyl beta-D-glucoside. This is Serine carboxypeptidase-like 13 (SCPL13) from Arabidopsis thaliana (Mouse-ear cress).